The chain runs to 389 residues: Phospho-N-acetylmuramoyl-pentapeptide-transferase (389 aa).

The next 10 helical transmembrane spans lie at 25–45 (RAVMATITALVIGLVCGPWVI), 73–93 (TMGGVLILIGIAVATLLWGDL), 97–117 (FIWIVMLVTFGFGVIGWVDDY), 135–155 (FWQSVIGLFAAVYLAFSVSEA), 190–210 (ISYPLGVWGFIALTYFVIVGA), 222–242 (GLVIMPVVLVGASLGVFAYVM), 258–278 (GAGELLIFCSAMGGAGLAFLW), 286–306 (VFMGDVGALALGGALGTVAVI), 311–331 (IVLFIMGGIFVAETLSVMLQV), and 366–386 (QVVVRFWIITLMLCLFGLSTL).

Belongs to the glycosyltransferase 4 family. MraY subfamily. Mg(2+) serves as cofactor.

The protein localises to the cell inner membrane. It carries out the reaction UDP-N-acetyl-alpha-D-muramoyl-L-alanyl-gamma-D-glutamyl-meso-2,6-diaminopimeloyl-D-alanyl-D-alanine + di-trans,octa-cis-undecaprenyl phosphate = di-trans,octa-cis-undecaprenyl diphospho-N-acetyl-alpha-D-muramoyl-L-alanyl-D-glutamyl-meso-2,6-diaminopimeloyl-D-alanyl-D-alanine + UMP. It functions in the pathway cell wall biogenesis; peptidoglycan biosynthesis. Catalyzes the initial step of the lipid cycle reactions in the biosynthesis of the cell wall peptidoglycan: transfers peptidoglycan precursor phospho-MurNAc-pentapeptide from UDP-MurNAc-pentapeptide onto the lipid carrier undecaprenyl phosphate, yielding undecaprenyl-pyrophosphoryl-MurNAc-pentapeptide, known as lipid I. The chain is Phospho-N-acetylmuramoyl-pentapeptide-transferase from Burkholderia pseudomallei (strain 1106a).